Here is a 353-residue protein sequence, read N- to C-terminus: Ubiquinol oxidase 1, mitochondrial (353 aa).

A mitochondrion-targeting transit peptide spans 1–69 (MMTRGATRMT…RHFPVMGSRS (69 aa)). Residues 77 to 99 (DKQHDKKAENGSAAATGGGDGGD) form a disordered region. A helical membrane pass occupies residues 178–198 (AMMLETVAAVPGMVGGMLLHC). The Fe cation site is built by glutamate 182, glutamate 221, and histidine 224. The chain crosses the membrane as a helical span at residues 240–260 (ALVFAVQGVFFNAYFVTYLLS). 3 residues coordinate Fe cation: glutamate 272, glutamate 323, and histidine 326.

It belongs to the alternative oxidase family. Homodimer; disulfide-linked. The cofactor is Fe cation.

The protein resides in the mitochondrion inner membrane. It carries out the reaction 2 a ubiquinol + O2 = 2 a ubiquinone + 2 H2O. Its activity is regulated as follows. Stimulated by reduction of the disulfide bond and the presence of pyruvate. Catalyzes the cyanide-resistant oxidation of ubiquinol and the reduction of molecular oxygen to water, but does not translocate protons and consequently is not linked to oxidative phosphorylation. May increase respiration when the cytochrome respiratory pathway is restricted, or in response to low temperatures. The polypeptide is Ubiquinol oxidase 1, mitochondrial (AOX1) (Nicotiana tabacum (Common tobacco)).